A 497-amino-acid polypeptide reads, in one-letter code: Serine/threonine-protein kinase 3 (497 aa).

Met-1 carries the N-acetylmethionine modification. Positions 1–20 (MEQPPASKSKLKKLSEDSLT) are disordered. A Phosphoserine modification is found at Ser-15. In terms of domain architecture, Protein kinase spans 27 to 278 (FDVLEKLGEG…ATQLLQHPFI (252 aa)). Residues 33 to 41 (LGEGSYGSV) and Lys-56 each bind ATP. Phosphothreonine; by PKB/AKT1 is present on Thr-117. Asp-146 serves as the catalytic Proton acceptor. 2 residues coordinate Mg(2+): Asn-151 and Asp-164. Thr-180 carries the post-translational modification Phosphothreonine; by autocatalysis. A coiled-coil region spans residues 287–328 (LRDLIAEAMEIKAKRHEEQQRELEEEEENSDEDELDSHTMVK). Disordered regions lie at residues 301–343 (RHEE…TSTM) and 368–394 (NSEEEEEEEEEEEEDGTMKRNATSPQV). A compositionally biased stretch (acidic residues) spans 309 to 321 (LEEEEENSDEDEL). Ser-316 carries the phosphoserine modification. The span at 326–343 (MVKTSSESVGTMRATSTM) shows a compositional bias: polar residues. Residue Thr-336 is modified to Phosphothreonine. Positions 366-387 (VINSEEEEEEEEEEEEDGTMKR) form a coiled coil. Over residues 369 to 382 (SEEEEEEEEEEEED) the composition is skewed to acidic residues. Thr-384 is modified (phosphothreonine). Phosphothreonine; by PKB/AKT1 is present on Thr-390. Ser-391 and Ser-450 each carry phosphoserine. The SARAH domain occupies 443–490 (FDFLKNLSLEELQMRLKALDPMMEREIEELHQRYSAKRQPILDAMDAK). A coiled-coil region spans residues 448-479 (NLSLEELQMRLKALDPMMEREIEELHQRYSAK).

The protein belongs to the protein kinase superfamily. STE Ser/Thr protein kinase family. STE20 subfamily. As to quaternary structure, homodimer; mediated via the coiled-coil region. Interacts with NORE1, which inhibits autoactivation. Interacts with and stabilizes SAV1. Interacts with RAF1, which prevents dimerization and phosphorylation. Interacts with RASSF1. Interacts (via SARAH domain) with isoform 1 of NEK2. Interacts with ESR1 only in the presence of SAV1. Interacts with PKB/AKT1. Forms a tripartite complex with MOBKL1B and STK38. Interacts with RASSF2 (via SARAH domain). Interacts with DLG5 (via PDZ domain 3). Interacts with LATS1; this interaction is inhibited in the presence of DLG5. Interacts with MARK3 in the presence of DLG5. Interacts with RASSF5; this interaction inhibits STK3 autoactivation through heterodimerization. Interacts (when phosphorylated) with SLMAP (via FHA domain); the interaction associates STK3 with the STRIPAK complex. Mg(2+) is required as a cofactor. Post-translationally, autophosphorylated on two residues Thr-174 and Thr-180, leading to activation. Phosphorylation at Thr-117 and Thr-390 by PKB/AKT1, leads to inhibition of its: cleavage, kinase activity, autophosphorylation at Thr-180, binding to RASSF1 and nuclear translocation, and increase in its binding to RAF1. Phosphorylated at Ser-15 by PLK1, leading to activation. In terms of processing, proteolytically cleaved by caspase-3 during apoptosis. Proteolytic cleavage results in kinase activation and nuclear translocation of the truncated form (MST1/N). Ubiquitinated by TRIM69; leading to its redistribution to the perinuclear cytoskeleton.

It localises to the cytoplasm. The protein resides in the nucleus. The catalysed reaction is L-seryl-[protein] + ATP = O-phospho-L-seryl-[protein] + ADP + H(+). It catalyses the reaction L-threonyl-[protein] + ATP = O-phospho-L-threonyl-[protein] + ADP + H(+). Its activity is regulated as follows. Inhibited by the C-terminal non-catalytic region. Activated by caspase-cleavage. Full activation also requires homodimerization and autophosphorylation of Thr-180, which are inhibited by the proto-oncogene product RAF1. Activated by RASSF1 which acts by preventing its dephosphorylation. When autophosphorylated at Thr-180, recruits STRIPAK complex and promotes PP2A-mediated dephosphorylation and inactivation of STK3. In terms of biological role, stress-activated, pro-apoptotic kinase which, following caspase-cleavage, enters the nucleus and induces chromatin condensation followed by internucleosomal DNA fragmentation. Key component of the Hippo signaling pathway which plays a pivotal role in organ size control and tumor suppression by restricting proliferation and promoting apoptosis. The core of this pathway is composed of a kinase cascade wherein STK3/MST2 and STK4/MST1, in complex with its regulatory protein SAV1, phosphorylates and activates LATS1/2 in complex with its regulatory protein MOB1, which in turn phosphorylates and inactivates YAP1 oncoprotein and WWTR1/TAZ. Phosphorylation of YAP1 by LATS2 inhibits its translocation into the nucleus to regulate cellular genes important for cell proliferation, cell death, and cell migration. STK3/MST2 and STK4/MST1 are required to repress proliferation of mature hepatocytes, to prevent activation of facultative adult liver stem cells (oval cells), and to inhibit tumor formation. Phosphorylates NKX2-1. Phosphorylates NEK2 and plays a role in centrosome disjunction by regulating the localization of NEK2 to centrosomes, and its ability to phosphorylate CROCC and CEP250. In conjunction with SAV1, activates the transcriptional activity of ESR1 through the modulation of its phosphorylation. Positively regulates RAF1 activation via suppression of the inhibitory phosphorylation of RAF1 on 'Ser-259'. Phosphorylates MOBKL1A and RASSF2. Phosphorylates MOBKL1B on 'Thr-74'. Acts cooperatively with MOBKL1B to activate STK38. The chain is Serine/threonine-protein kinase 3 (Stk3) from Mus musculus (Mouse).